A 580-amino-acid polypeptide reads, in one-letter code: Pentatricopeptide repeat-containing protein At5g10690 (580 aa).

PPR repeat units follow at residues 76-110 (NTIVMNSVLEACVHCGNIDLALRMFHEMAEPGGIG), 112-142 (DSISYATILKGLGKARRIDEAFQMLETIEYG), 151-181 (SSSLIYGLLDALINAGDLRRANGLLARYDIL), 189-223 (SVLIYNLLMKGYVNSESPQAAINLLDEMLRLRLEP), 224-254 (DRLTYNTLIHACIKCGDLDAAMKFFNDMKEK), 266-296 (DVVTYTTLVKGFGDATDLLSLQEIFLEMKLC), 302-337 (DRTAFTAVVDAMLKCGSTSGALCVFGEILKRSGANE), 342-376 (KPHLYLSMMRAFAVQGDYGMVRNLYLRLWPDSSGS), and 382-417 (QQEADNLLMEAALNDGQLDEALGILLSIVRRWKTIP). In terms of domain architecture, CBS spans 486–553 (VPIVDDRGSC…IVVHCGNFSG (68 aa)).

Belongs to the PPR family. P subfamily.

The polypeptide is Pentatricopeptide repeat-containing protein At5g10690 (CBSPPR1) (Arabidopsis thaliana (Mouse-ear cress)).